The primary structure comprises 1382 residues: Insulin receptor (1382 aa).

The first 27 residues, 1 to 27, serve as a signal peptide directing secretion; sequence MATGGRRGAAAAPLLVAVAALLLGAAG. Extracellular segments follow at residues 28-758 and 763-956; these read HLYP…PRPS and SLGD…NIAK. Cys-35 and Cys-53 are joined by a disulfide. Asn-43, Asn-52, Asn-105, and Asn-138 each carry an N-linked (GlcNAc...) asparagine glycan. 9 disulfide bridges follow: Cys-153/Cys-182, Cys-186/Cys-209, Cys-196/Cys-215, Cys-219/Cys-228, Cys-223/Cys-234, Cys-235/Cys-243, Cys-239/Cys-252, Cys-255/Cys-264, and Cys-268/Cys-280. Asn-242 is a glycosylation site (N-linked (GlcNAc...) asparagine). Residue Asn-282 is glycosylated (N-linked (GlcNAc...) asparagine). Intrachain disulfides connect Cys-286/Cys-311, Cys-293/Cys-301, Cys-315/Cys-328, Cys-331/Cys-335, and Cys-339/Cys-360. An N-linked (GlcNAc...) asparagine glycan is attached at Asn-322. N-linked (GlcNAc...) asparagine glycosylation is present at Asn-364. The residue at position 400 (Ser-400) is a Phosphoserine. Tyr-401 bears the Phosphotyrosine mark. Phosphoserine is present on Ser-407. 2 N-linked (GlcNAc...) asparagine glycosylation sites follow: Asn-424 and Asn-445. Cys-462 and Cys-495 are joined by a disulfide. Asn-541, Asn-633, Asn-651, and Asn-698 each carry an N-linked (GlcNAc...) asparagine glycan. Residues 624 to 726 enclose the Fibronectin type-III 1 domain; sequence VPLDPISVSN…SQILKELEES (103 aa). 2 disulfide bridges follow: Cys-674-Cys-899 and Cys-825-Cys-834. The tract at residues 686-708 is disordered; it reads SPPFESEDSQKHNQSEYEDSAGE. The segment at 733–741 is insulin-binding; that stretch reads EDYLHNVVF. The interval 746–766 is disordered; sequence TSSGTGAEDPRPSRKRRSLGD. Fibronectin type-III domains lie at 757 to 842 and 853 to 947; these read PSRK…YVSA and IVGP…VTDY. Asn-769 and Asn-782 each carry an N-linked (GlcNAc...) asparagine glycan. 2 N-linked (GlcNAc...) asparagine glycosylation sites follow: Asn-920 and Asn-933. The chain crosses the membrane as a helical span at residues 957 to 979; sequence IIIGPLIFVFLFSVVIGSIYLFL. Residues 980 to 1382 lie on the Cytoplasmic side of the membrane; the sequence is RKRQPDGPLG…ILTLPRSNPS (403 aa). A phosphotyrosine; by autocatalysis mark is found at Tyr-992, Tyr-999, and Tyr-1011. Tyr-999 is a region of interest (important for interaction with IRS1, SHC1 and STAT5B). The region spanning 1023–1298 is the Protein kinase domain; it reads ITLLRELGQG…LLKDDLHPSF (276 aa). Residues Ser-1033 and Lys-1057 each contribute to the ATP site. Lys-1079 is covalently cross-linked (Glycyl lysine isopeptide (Lys-Gly) (interchain with G-Cter in ubiquitin)). An S-nitrosocysteine modification is found at Cys-1083. Position 1104 to 1110 (1104 to 1110) interacts with ATP; that stretch reads ELMAHGD. Catalysis depends on Asp-1159, which acts as the Proton donor/acceptor. Residues 1163 to 1164 and Asp-1177 each bind ATP; that span reads RN. A phosphotyrosine; by autocatalysis mark is found at Tyr-1185, Tyr-1189, Tyr-1190, Tyr-1355, and Tyr-1361. The segment at 1360–1382 is disordered; the sequence is PYTHMNGGKKNGRILTLPRSNPS. The PIK3R1-binding stretch occupies residues 1361 to 1364; that stretch reads YTHM.

This sequence belongs to the protein kinase superfamily. Tyr protein kinase family. Insulin receptor subfamily. Tetramer of 2 alpha and 2 beta chains linked by disulfide bonds. The alpha chains carry the insulin-binding regions, while the beta chains carry the kinase domain. Forms a hybrid receptor with IGF1R, the hybrid is a tetramer consisting of 1 alpha chain and 1 beta chain of INSR and 1 alpha chain and 1 beta chain of IGF1R. Interacts with SORBS1 but dissociates from it following insulin stimulation. Binds SH2B2. Activated form of INSR interacts (via Tyr-999) with the PTB/PID domains of IRS1 and SHC1. The sequences surrounding the phosphorylated NPXY motif contribute differentially to either IRS1 or SHC1 recognition. Interacts (via tyrosines in the C-terminus) with IRS2 (via PTB domain and 591-786 AA); the 591-786 would be the primary anchor of IRS2 to INSR while the PTB domain would have a stabilizing action on the interaction with INSR. Interacts with the SH2 domains of the 85 kDa regulatory subunit of PI3K (PIK3R1) in vitro, when autophosphorylated on tyrosine residues. Interacts with SOCS7. Interacts (via the phosphorylated Tyr-999), with SOCS3. Interacts (via the phosphorylated Tyr-1185, Tyr-1189, Tyr-1190) with SOCS1. Interacts with CAV2 (tyrosine-phosphorylated form); the interaction is increased with 'Tyr-27'phosphorylation of CAV2. Interacts with ARRB2. Interacts with GRB10; this interaction blocks the association between IRS1/IRS2 and INSR, significantly reduces insulin-stimulated tyrosine phosphorylation of IRS1 and IRS2 and thus decreases insulin signaling. Interacts with GRB7. Interacts with PDPK1. Interacts (via Tyr-1190) with GRB14 (via BPS domain); this interaction protects the tyrosines in the activation loop from dephosphorylation, but promotes dephosphorylation of Tyr-999, this results in decreased interaction with, and phosphorylation of, IRS1. Interacts (via subunit alpha) with ENPP1 (via 485-599 AA); this interaction blocks autophosphorylation. Interacts with PTPRE; this interaction is dependent of Tyr-1185, Tyr-1189 and Tyr-1190 of the INSR. Interacts with STAT5B (via SH2 domain). Interacts with PTPRF. Interacts with ATIC; ATIC together with PRKAA2/AMPK2 and HACD3/PTPLAD1 is proposed to be part of a signaling netwok regulating INSR autophosphorylation and endocytosis. Interacts with the cone snail venom insulin Con-Ins G1. Interacts with the insulin receptor SORL1; this interaction strongly increases its surface exposure, hence strengthens insulin signal reception. Interacts (tyrosine phosphorylated) with CCDC88A/GIV (via SH2-like region); binding requires autophosphorylation of the INSR C-terminal region. Interacts with GNAI3; the interaction is probably mediated by CCDC88A/GIV. Interacts with LMBRD1. Interacts (in response to insulin stimulation) with NCK1; this interaction may recruit PTPN1 to mediate INSR dephosphorylation. Interacts with CD248; this interaction diminishes INSR autophosphorylation. After being transported from the endoplasmic reticulum to the Golgi apparatus, the single glycosylated precursor is further glycosylated and then cleaved, followed by its transport to the plasma membrane. In terms of processing, autophosphorylated on tyrosine residues in response to insulin. Phosphorylation of Tyr-999 is required for binding to IRS1, SHC1 and STAT5B. Dephosphorylated by PTPRE at Tyr-999, Tyr-1185, Tyr-1189 and Tyr-1190. May also be phosphorylated at Tyr-1185 and Tyr-1190 by mTORC2. Dephosphorylated by PTPRF and PTPN1. Dephosphorylated by PTPN2; down-regulates insulin-induced signaling. Dephosphorylation at Tyr-1189 and Tyr-1190 requires the SH2/SH3 adapter protein NCK1, probably to recruit its interaction partner PTPN1. Post-translationally, S-nitrosylation at Cys-1083 by BLVRB inhibits the receptor tyrosine kinase, thereby inhibiting insulin signaling. Ubiquitinated by MARCHF1; leading to degradation thereby reducing surface INSR expression. As to expression, isoform Long and isoform Short are predominantly expressed in tissue targets of insulin metabolic effects: liver, adipose tissue and skeletal muscle but are also expressed in the peripheral nerve, kidney, pulmonary alveoli, pancreatic acini, placenta vascular endothelium, fibroblasts, monocytes, granulocytes, erythrocytes and skin. Isoform Short is preferentially expressed in fetal cells such as fetal fibroblasts, muscle, liver and kidney. Found as a hybrid receptor with IGF1R in muscle, heart, kidney, adipose tissue, skeletal muscle, hepatoma, fibroblasts, spleen and placenta (at protein level). Overexpressed in several tumors, including breast, colon, lung, ovary, and thyroid carcinomas.

It is found in the cell membrane. It localises to the late endosome. Its subcellular location is the lysosome. It carries out the reaction L-tyrosyl-[protein] + ATP = O-phospho-L-tyrosyl-[protein] + ADP + H(+). With respect to regulation, activated in response to insulin. Autophosphorylation activates the kinase activity. PTPN1, PTPRE and PTPRF dephosphorylate important tyrosine residues, thereby reducing INSR activity. Inhibited by ENPP1. GRB10 and GRB14 inhibit the catalytic activity of the INSR, they block access of substrates to the activated receptor. SOCS1 and SOCS3 act as negative regulators of INSR activity, they bind to the activated INRS and interfere with the phosphorylation of INSR substrates. Its function is as follows. Receptor tyrosine kinase which mediates the pleiotropic actions of insulin. Binding of insulin leads to phosphorylation of several intracellular substrates, including, insulin receptor substrates (IRS1, 2, 3, 4), SHC, GAB1, CBL and other signaling intermediates. Each of these phosphorylated proteins serve as docking proteins for other signaling proteins that contain Src-homology-2 domains (SH2 domain) that specifically recognize different phosphotyrosine residues, including the p85 regulatory subunit of PI3K and SHP2. Phosphorylation of IRSs proteins lead to the activation of two main signaling pathways: the PI3K-AKT/PKB pathway, which is responsible for most of the metabolic actions of insulin, and the Ras-MAPK pathway, which regulates expression of some genes and cooperates with the PI3K pathway to control cell growth and differentiation. Binding of the SH2 domains of PI3K to phosphotyrosines on IRS1 leads to the activation of PI3K and the generation of phosphatidylinositol-(3, 4, 5)-triphosphate (PIP3), a lipid second messenger, which activates several PIP3-dependent serine/threonine kinases, such as PDPK1 and subsequently AKT/PKB. The net effect of this pathway is to produce a translocation of the glucose transporter SLC2A4/GLUT4 from cytoplasmic vesicles to the cell membrane to facilitate glucose transport. Moreover, upon insulin stimulation, activated AKT/PKB is responsible for: anti-apoptotic effect of insulin by inducing phosphorylation of BAD; regulates the expression of gluconeogenic and lipogenic enzymes by controlling the activity of the winged helix or forkhead (FOX) class of transcription factors. Another pathway regulated by PI3K-AKT/PKB activation is mTORC1 signaling pathway which regulates cell growth and metabolism and integrates signals from insulin. AKT mediates insulin-stimulated protein synthesis by phosphorylating TSC2 thereby activating mTORC1 pathway. The Ras/RAF/MAP2K/MAPK pathway is mainly involved in mediating cell growth, survival and cellular differentiation of insulin. Phosphorylated IRS1 recruits GRB2/SOS complex, which triggers the activation of the Ras/RAF/MAP2K/MAPK pathway. In addition to binding insulin, the insulin receptor can bind insulin-like growth factors (IGFI and IGFII). Isoform Short has a higher affinity for IGFII binding. When present in a hybrid receptor with IGF1R, binds IGF1. PubMed:12138094 shows that hybrid receptors composed of IGF1R and INSR isoform Long are activated with a high affinity by IGF1, with low affinity by IGF2 and not significantly activated by insulin, and that hybrid receptors composed of IGF1R and INSR isoform Short are activated by IGF1, IGF2 and insulin. In contrast, PubMed:16831875 shows that hybrid receptors composed of IGF1R and INSR isoform Long and hybrid receptors composed of IGF1R and INSR isoform Short have similar binding characteristics, both bind IGF1 and have a low affinity for insulin. In adipocytes, inhibits lipolysis. The chain is Insulin receptor (INSR) from Homo sapiens (Human).